A 954-amino-acid polypeptide reads, in one-letter code: uncharacterized protein (954 aa).

An N-terminal signal peptide occupies residues 1–35 (MKILFNNTFELFCLFVFVTWALFLNNNGILYPVHC). The stretch at 381–415 (KNKISSARDDIQKDINKMESELINVSNEINRLDIV) forms a coiled coil. The segment at 733–765 (NIRNDNNNNNNNNNNNSNNNNNNNNNNKDNSVA) is disordered. Over residues 736-763 (NDNNNNNNNNNNNSNNNNNNNNNNKDNS) the composition is skewed to low complexity.

This is an uncharacterized protein from Plasmodium falciparum (isolate 3D7).